The following is a 347-amino-acid chain: Chlorophyll a/b light-harvesting protein PcbB (347 aa).

6 helical membrane passes run 25 to 45 (GLWLAAHVAQASFIVLWAGAI), 64 to 84 (LILIPHLAALGIGVGAGGVVV), 91 to 111 (AIGAVHLISSFVFAFGAIFHV), 206 to 226 (LASGHAFIGVVLLSGGVWHIT), 247 to 267 (LSSALAGLSMLGFAAAYFSAV), and 308 to 328 (LCNVHFYLAFFVLQGHLWHAI).

This sequence belongs to the PsbB/PsbC family. IsiA/Pcb subfamily. In terms of assembly, the antenna complex consists of chlorophylls (a and b) and chlorophyll a/b binding proteins. Chlorophyll a serves as cofactor. Requires chlorophyll b as cofactor.

Its subcellular location is the cellular thylakoid membrane. The antenna complex functions as a light receptor, it captures and delivers excitation energy to photosystems II and I. The Prochlorales pcb genes are not related to higher plant LHCs. In Prochlorothrix hollandica, this protein is Chlorophyll a/b light-harvesting protein PcbB (pcbB).